Consider the following 188-residue polypeptide: dCTP deaminase (188 aa).

Residues 111 to 116 (KSTYAR), 135 to 137 (TLE), glutamine 156, tyrosine 170, lysine 179, and glutamine 180 contribute to the dCTP site. Catalysis depends on glutamate 137, which acts as the Proton donor/acceptor.

Belongs to the dCTP deaminase family. As to quaternary structure, homotrimer.

The enzyme catalyses dCTP + H2O + H(+) = dUTP + NH4(+). The protein operates within pyrimidine metabolism; dUMP biosynthesis; dUMP from dCTP (dUTP route): step 1/2. Catalyzes the deamination of dCTP to dUTP. The sequence is that of dCTP deaminase from Orientia tsutsugamushi (strain Ikeda) (Rickettsia tsutsugamushi).